Reading from the N-terminus, the 269-residue chain is Dermonecrotic toxin SpeSicTox-betaIB3 (269 aa).

The active site involves His-5. The Mg(2+) site is built by Glu-25 and Asp-27. The active-site Nucleophile is His-41. 2 disulfides stabilise this stretch: Cys-45-Cys-51 and Cys-47-Cys-191. Asp-85 lines the Mg(2+) pocket.

Belongs to the arthropod phospholipase D family. Class II subfamily. The cofactor is Mg(2+). As to expression, expressed by the venom gland.

It localises to the secreted. The enzyme catalyses an N-(acyl)-sphingosylphosphocholine = an N-(acyl)-sphingosyl-1,3-cyclic phosphate + choline. It carries out the reaction an N-(acyl)-sphingosylphosphoethanolamine = an N-(acyl)-sphingosyl-1,3-cyclic phosphate + ethanolamine. The catalysed reaction is a 1-acyl-sn-glycero-3-phosphocholine = a 1-acyl-sn-glycero-2,3-cyclic phosphate + choline. It catalyses the reaction a 1-acyl-sn-glycero-3-phosphoethanolamine = a 1-acyl-sn-glycero-2,3-cyclic phosphate + ethanolamine. In terms of biological role, dermonecrotic toxins cleave the phosphodiester linkage between the phosphate and headgroup of certain phospholipids (sphingolipid and lysolipid substrates), forming an alcohol (often choline) and a cyclic phosphate. This toxin acts on sphingomyelin (SM). It may also act on ceramide phosphoethanolamine (CPE), lysophosphatidylcholine (LPC) and lysophosphatidylethanolamine (LPE), but not on lysophosphatidylserine (LPS), and lysophosphatidylglycerol (LPG). It acts by transphosphatidylation, releasing exclusively cyclic phosphate products as second products. Induces dermonecrosis, hemolysis, increased vascular permeability, edema, inflammatory response, and platelet aggregation. The protein is Dermonecrotic toxin SpeSicTox-betaIB3 of Sicarius peruensis (Six-eyed sand spider).